A 177-amino-acid polypeptide reads, in one-letter code: ATP-dependent protease subunit HslV (177 aa).

Thr-4 is an active-site residue. Positions 159, 162, and 165 each coordinate Na(+).

Belongs to the peptidase T1B family. HslV subfamily. A double ring-shaped homohexamer of HslV is capped on each side by a ring-shaped HslU homohexamer. The assembly of the HslU/HslV complex is dependent on binding of ATP.

It is found in the cytoplasm. The catalysed reaction is ATP-dependent cleavage of peptide bonds with broad specificity.. Allosterically activated by HslU binding. In terms of biological role, protease subunit of a proteasome-like degradation complex believed to be a general protein degrading machinery. In Mesorhizobium japonicum (strain LMG 29417 / CECT 9101 / MAFF 303099) (Mesorhizobium loti (strain MAFF 303099)), this protein is ATP-dependent protease subunit HslV.